The primary structure comprises 340 residues: Anthocyanidin reductase (340 aa).

NADP(+)-binding residues include lysine 49 and tyrosine 169.

Belongs to the NAD(P)-dependent epimerase/dehydratase family. Dihydroflavonol-4-reductase subfamily. As to quaternary structure, homo- or heterodimer. As to expression, flowers and young siliques. Detected specifically in the endothelium of seed coat.

The catalysed reaction is a (2R,3R)-flavan-3-ol + 2 NAD(+) = an anthocyanidin with a 3-hydroxy group + 2 NADH + 2 H(+). It catalyses the reaction a (2R,3R)-flavan-3-ol + 2 NADP(+) = an anthocyanidin with a 3-hydroxy group + 2 NADPH + 2 H(+). It participates in secondary metabolite biosynthesis; flavonoid biosynthesis. Its activity is regulated as follows. Inhibited by (+)-catechin, quercetin and (+)- and (-)-dihydroquercetin. Not inhibited by salt. Positive cooperativity with NADPH acting as cosubstrate and modulator. In terms of biological role, involved in the biosynthesis of condensed tannins. Converts cyanidin into (-)-epicatechin as the major product. The protein is Anthocyanidin reductase (BAN) of Arabidopsis thaliana (Mouse-ear cress).